The sequence spans 630 residues: 1-deoxy-D-xylulose-5-phosphate synthase (630 aa).

Thiamine diphosphate contacts are provided by residues His73 and 114 to 116 (SHA). Asp146 is a binding site for Mg(2+). Thiamine diphosphate-binding positions include 147-148 (GA), Asn176, Phe287, and Glu371. A Mg(2+)-binding site is contributed by Asn176.

Belongs to the transketolase family. DXPS subfamily. As to quaternary structure, homodimer. The cofactor is Mg(2+). Thiamine diphosphate serves as cofactor.

It carries out the reaction D-glyceraldehyde 3-phosphate + pyruvate + H(+) = 1-deoxy-D-xylulose 5-phosphate + CO2. It participates in metabolic intermediate biosynthesis; 1-deoxy-D-xylulose 5-phosphate biosynthesis; 1-deoxy-D-xylulose 5-phosphate from D-glyceraldehyde 3-phosphate and pyruvate: step 1/1. Functionally, catalyzes the acyloin condensation reaction between C atoms 2 and 3 of pyruvate and glyceraldehyde 3-phosphate to yield 1-deoxy-D-xylulose-5-phosphate (DXP). The sequence is that of 1-deoxy-D-xylulose-5-phosphate synthase from Corynebacterium jeikeium (strain K411).